Reading from the N-terminus, the 60-residue chain is MAVPKRKTSPSRRNMRRSHHALGANSFIEDKDTGELRRPHHVDLKTGMYNGKQILTPKED.

Over residues 1-20 (MAVPKRKTSPSRRNMRRSHH) the composition is skewed to basic residues. Positions 1 to 60 (MAVPKRKTSPSRRNMRRSHHALGANSFIEDKDTGELRRPHHVDLKTGMYNGKQILTPKED) are disordered. Residues 28-44 (IEDKDTGELRRPHHVDL) show a composition bias toward basic and acidic residues.

Belongs to the bacterial ribosomal protein bL32 family.

This chain is Large ribosomal subunit protein bL32, found in Caulobacter vibrioides (strain ATCC 19089 / CIP 103742 / CB 15) (Caulobacter crescentus).